Reading from the N-terminus, the 547-residue chain is Ribosome protection protein VmlR (547 aa).

Residues 5–200 (VTLTNVSYEV…FREKKRLTQQ (196 aa)) enclose the ABC transporter 1 domain. 37 to 44 (GKNGAGKS) lines the ATP pocket. An antibiotic resistance domain (ARD) region spans residues 183 to 289 (GNYSGYMKFR…SIDTTHKTGK (107 aa)). Coiled coils occupy residues 193–222 (EKKR…GLAS) and 245–269 (AKRT…AKAE). One can recognise an ABC transporter 2 domain in the interval 292–504 (LEVQNVTKAF…REELRLKLET (213 aa)). ATP is bound at residue 324-331 (GPNGSGKT). Residues 483–547 (KQLNDVPSER…KELDHQDKKD (65 aa)) are C-terminal extension (CTE). Residues 488–543 (VPSERNEREELRLKLETERQEVLGKLSFMTPNDKGYKELDQAFNELTKRIKELDHQ) are a coiled coil.

It belongs to the ABC transporter superfamily. ABCF family. ARE2 subfamily. In terms of assembly, binds within the E-site of the 70S ribosome, where it contacts ribosomal proteins L1, L5, L33-1, S7, S11, the 16 and 23S rRNAs and the acceptor arm of the P-site tRNA.

The protein localises to the cytoplasm. Functionally, recognizes and binds in the vacant E-site of ribosomes stalled by some peptidyltransferase center (PTC)-targeting antibiotics. Makes contact with the PTC and both ribosomal subunits. Induces conformational changes in the P-site, which allows it to dislodge the antibiotic from its PTC binding site. Binds to ribosomes either directly following translation initation or subsequent to E tRNA release during elongation. Involved in resistance to a narrow spectrum of antibiotics (the streptogramin A antibiotic virginiamycin M, the lincosamide antibiotic lincomycin and the pleuromutilin antibiotic tiamulin). The protein is Ribosome protection protein VmlR of Bacillus subtilis (strain 168).